A 1025-amino-acid polypeptide reads, in one-letter code: Exportin-T (1025 aa).

The protein belongs to the exportin family.

The protein localises to the nucleus. It localises to the cytoplasm. Functionally, tRNA nucleus export receptor which facilitates tRNA translocation across the nuclear pore complex. Involved in pre-tRNA splicing, probably by affecting the interaction of pre-tRNA with splicing endonuclease. This chain is Exportin-T (LOS1), found in Candida albicans (strain SC5314 / ATCC MYA-2876) (Yeast).